The primary structure comprises 735 residues: Rho GTPase-activating protein SYDE1 (735 aa).

Residues 1-253 (MAEPLLRKTF…SPTSFRPYEV (253 aa)) form a disordered region. Basic and acidic residues predominate over residues 14–31 (RGREKLPRKKSDAKERGH). A compositionally biased stretch (pro residues) spans 35–46 (RPEPSPPEPEPQ). Low complexity predominate over residues 47–71 (APEGSQAGAEGPSSPEASRSPARGA). The segment covering 122–131 (PPAPEPPGPQ) has biased composition (pro residues). The segment covering 211 to 221 (GGPGPAAGPGG) has biased composition (gly residues). Residues Ser-224, Ser-231, Ser-235, and Ser-244 each carry the phosphoserine modification. Residues 249–366 (RPYEVGPAAR…FRGCQAQQLA (118 aa)) enclose the C2 domain. A Rho-GAP domain is found at 398–604 (LPLPLLVERE…YLLQSWPDPR (207 aa)). At Ser-575 the chain carries Phosphoserine. Disordered regions lie at residues 608 to 651 (QSPD…SNRY) and 674 to 696 (DYDH…PRVT). Ser-681 and Ser-683 each carry phosphoserine.

In terms of processing, palmitoylated. Probably palmitoylated by ZDHHC3 and ZDHHC7. Expressed in trophoblast cells of placental villi.

GTPase activator for the Rho-type GTPases. As a GCM1 downstream effector, it is involved in placental development and positively regulates trophoblast cells migration. It regulates cytoskeletal remodeling by controlling the activity of Rho GTPases including RHOA, CDC42 and RAC1. This is Rho GTPase-activating protein SYDE1 (SYDE1) from Homo sapiens (Human).